The chain runs to 632 residues: MKIPVSRLEKFTSDNARVDTAAIQSLPNSRKIYIQGSRADIRVPMREISQSDTNTSQGIEKNPPICVYDTSGPYSDPDTNIDIRHGLLPLREKWIEEREDTEVLSGLSSSYSLKRLQDPALTAMRFNLTRPVRRAKGGSNVTQMHYARRGIITPEMEFIAIRENQRRERVTDLAKSELLTRQHPGQSFGAAIQEWITPEFVRDEVARGRAIIPANINHPEAEPMIIGRNFLVKINANIGNSALGSSIQDEVEKMTWAIRWGGDTVMDLSTGKNIHETREWIIRNSPVPIGTVPIYQALEKVDGKAEELTWEIFRDTLIEQAEQGVDYFTIHAGVRLPFVPMTAKRMTGIVSRGGSIMAKWCLAHHKESFLYTHFEDICEIMKAYDVSFSLGDGLRPGSIYDANDEAQFAELKTLGELTKIAWKHDIQTMIEGPGHVPMHLIRENMDLQLEHCHEAPFYTLGPLTTDIAPGYDHITSAIGAAMIGWYGTAMLCYVTPKEHLGLPDKDDVKDGIITYKIAAHAADLAKGHPGAQIRDNALSKARFEFRWNDQFNLSLDPDKARQFHDETLPQEGAKLAHFCSMCGPNFCSMKITQDVRDYAAQQGISENEALQEGMAKKADEFIEKGGEIYRKL.

Residues N237, M266, Y295, H331, 351–353 (SRG), 392–395 (DGLR), and E431 each bind substrate. H435 contributes to the Zn(2+) binding site. Residue Y458 coordinates substrate. A Zn(2+)-binding site is contributed by H499. The [4Fe-4S] cluster site is built by C579, C582, and C587.

It belongs to the ThiC family. As to quaternary structure, homodimer. It depends on [4Fe-4S] cluster as a cofactor.

It catalyses the reaction 5-amino-1-(5-phospho-beta-D-ribosyl)imidazole + S-adenosyl-L-methionine = 4-amino-2-methyl-5-(phosphooxymethyl)pyrimidine + CO + 5'-deoxyadenosine + formate + L-methionine + 3 H(+). It participates in cofactor biosynthesis; thiamine diphosphate biosynthesis. Functionally, catalyzes the synthesis of the hydroxymethylpyrimidine phosphate (HMP-P) moiety of thiamine from aminoimidazole ribotide (AIR) in a radical S-adenosyl-L-methionine (SAM)-dependent reaction. The protein is Phosphomethylpyrimidine synthase of Nitrosomonas eutropha (strain DSM 101675 / C91 / Nm57).